The sequence spans 199 residues: Acireductone dioxygenase 1 (199 aa).

His99, His101, Glu105, and His144 together coordinate Fe(2+). Residues His99, His101, Glu105, and His144 each coordinate Ni(2+).

It belongs to the acireductone dioxygenase (ARD) family. The cofactor is Fe(2+). Requires Ni(2+) as cofactor.

Its subcellular location is the cytoplasm. It is found in the nucleus. It carries out the reaction 1,2-dihydroxy-5-(methylsulfanyl)pent-1-en-3-one + O2 = 4-methylsulfanyl-2-oxobutanoate + formate + 2 H(+). The catalysed reaction is 1,2-dihydroxy-5-(methylsulfanyl)pent-1-en-3-one + O2 = 3-(methylsulfanyl)propanoate + CO + formate + 2 H(+). It participates in amino-acid biosynthesis; L-methionine biosynthesis via salvage pathway; L-methionine from S-methyl-5-thio-alpha-D-ribose 1-phosphate: step 5/6. Catalyzes 2 different reactions between oxygen and the acireductone 1,2-dihydroxy-3-keto-5-methylthiopentene (DHK-MTPene) depending upon the metal bound in the active site. Fe-containing acireductone dioxygenase (Fe-ARD) produces formate and 2-keto-4-methylthiobutyrate (KMTB), the alpha-ketoacid precursor of methionine in the methionine recycle pathway. Ni-containing acireductone dioxygenase (Ni-ARD) produces methylthiopropionate, carbon monoxide and formate, and does not lie on the methionine recycle pathway. The sequence is that of Acireductone dioxygenase 1 (ARD1) from Arabidopsis thaliana (Mouse-ear cress).